Reading from the N-terminus, the 55-residue chain is Large ribosomal subunit protein bL33 (55 aa).

Belongs to the bacterial ribosomal protein bL33 family.

This chain is Large ribosomal subunit protein bL33, found in Azorhizobium caulinodans (strain ATCC 43989 / DSM 5975 / JCM 20966 / LMG 6465 / NBRC 14845 / NCIMB 13405 / ORS 571).